Consider the following 360-residue polypeptide: F420-dependent hydroxymycolic acid dehydrogenase (360 aa).

The segment at residues 1–40 (MTGISRRTFGLAAGFGAIGAGGLGGGCSTRSGPTPTPEPA) is a signal peptide (tat-type signal). Asp77 provides a ligand contact to coenzyme F420-(gamma-Glu)n. His78 functions as the Proton donor in the catalytic mechanism. Position 145-146 (145-146 (TG)) interacts with coenzyme F420-(gamma-Glu)n. Glu147 acts as the Proton acceptor in catalysis. Residues Asn150 and 213-214 (SG) contribute to the coenzyme F420-(gamma-Glu)n site.

This sequence belongs to the F420-dependent hydroxymycolic acid dehydrogenase family. In terms of assembly, homodimer. In terms of processing, is exported by the Tat system. The position of the signal peptide cleavage has not been experimentally proven. May be lipidated.

The protein localises to the cell envelope. Its pathway is lipid metabolism; mycolic acid biosynthesis. Its activity is regulated as follows. Is inhibited by the anti-tuberculous drug PA-824, a bicyclic 4-nitroimidazole class compound. Therefore, this is consistent with the finding that PA-824 inhibits the formation of K-MAs and causes an accumulation of hydroxymycolic acids (H-MAs) in M.tuberculosis. Catalyzes the coenzyme F420-dependent oxidation of hydroxymycolic acids (H-MAs) to ketomycolic acids (K-MAs), a lipid class making up the mycobacterial pseudo-outer membrane and over one-third of the dry weight of M.tuberculosis. Does not exhibit F420-dependent glucose-6-phosphate dehydrogenase (FGD) activity. This chain is F420-dependent hydroxymycolic acid dehydrogenase, found in Mycobacterium tuberculosis (strain ATCC 25618 / H37Rv).